The primary structure comprises 268 residues: 5'-nucleotidase SurE (268 aa).

The a divalent metal cation site is built by Asp-24, Asp-25, Ser-55, and Asn-111.

The protein belongs to the SurE nucleotidase family. It depends on a divalent metal cation as a cofactor.

It localises to the cytoplasm. The enzyme catalyses a ribonucleoside 5'-phosphate + H2O = a ribonucleoside + phosphate. Nucleotidase that shows phosphatase activity on nucleoside 5'-monophosphates. The sequence is that of 5'-nucleotidase SurE from Deinococcus radiodurans (strain ATCC 13939 / DSM 20539 / JCM 16871 / CCUG 27074 / LMG 4051 / NBRC 15346 / NCIMB 9279 / VKM B-1422 / R1).